The following is a 485-amino-acid chain: Glutamyl-tRNA(Gln) amidotransferase subunit A (485 aa).

Catalysis depends on charge relay system residues lysine 79 and serine 154. Serine 178 acts as the Acyl-ester intermediate in catalysis.

This sequence belongs to the amidase family. GatA subfamily. As to quaternary structure, heterotrimer of A, B and C subunits.

The enzyme catalyses L-glutamyl-tRNA(Gln) + L-glutamine + ATP + H2O = L-glutaminyl-tRNA(Gln) + L-glutamate + ADP + phosphate + H(+). Its function is as follows. Allows the formation of correctly charged Gln-tRNA(Gln) through the transamidation of misacylated Glu-tRNA(Gln) in organisms which lack glutaminyl-tRNA synthetase. The reaction takes place in the presence of glutamine and ATP through an activated gamma-phospho-Glu-tRNA(Gln). In Clostridium botulinum (strain Eklund 17B / Type B), this protein is Glutamyl-tRNA(Gln) amidotransferase subunit A.